The chain runs to 117 residues: Large ribosomal subunit protein uL18 (117 aa).

The protein belongs to the universal ribosomal protein uL18 family. As to quaternary structure, part of the 50S ribosomal subunit; part of the 5S rRNA/L5/L18/L25 subcomplex. Contacts the 5S and 23S rRNAs.

Its function is as follows. This is one of the proteins that bind and probably mediate the attachment of the 5S RNA into the large ribosomal subunit, where it forms part of the central protuberance. This chain is Large ribosomal subunit protein uL18, found in Francisella tularensis subsp. tularensis (strain FSC 198).